Reading from the N-terminus, the 721-residue chain is MNQTPWKFKTFRDLLLKSVAERDLFTGKSLHALYVKSIVASSTYLSNHFVNLYSKCGRLSYARAAFYSTEEPNVFSYNVIVKAYAKDSKIHIARQLFDEIPQPDTVSYNTLISGYADARETFAAMVLFKRMRKLGFEVDGFTLSGLIAACCDRVDLIKQLHCFSVSGGFDSYSSVNNAFVTYYSKGGLLREAVSVFYGMDELRDEVSWNSMIVAYGQHKEGAKALALYKEMIFKGFKIDMFTLASVLNALTSLDHLIGGRQFHGKLIKAGFHQNSHVGSGLIDFYSKCGGCDGMYDSEKVFQEILSPDLVVWNTMISGYSMNEELSEEAVKSFRQMQRIGHRPDDCSFVCVTSACSNLSSPSQCKQIHGLAIKSHIPSNRISVNNALISLYYKSGNLQDARWVFDRMPELNAVSFNCMIKGYAQHGHGTEALLLYQRMLDSGIAPNKITFVAVLSACAHCGKVDEGQEYFNTMKETFKIEPEAEHYSCMIDLLGRAGKLEEAERFIDAMPYKPGSVAWAALLGACRKHKNMALAERAANELMVMQPLAATPYVMLANMYADARKWEEMASVRKSMRGKRIRKKPGCSWIEVKKKKHVFVAEDWSHPMIREVNEYLEEMMKKMKKVGYVMDKKWAMVKEDEAGEGDEEMRLGHHSEKLAVAFGLMSTRDGEELVVVKNLRICGDCHNAIKFMSAVAGREIIVRDNLRFHCFKDGKCSCGDYW.

14 PPR repeats span residues 42–72 (STYLSNHFVNLYSKCGRLSYARAAFYSTEEP), 73–103 (NVFSYNVIVKAYAKDSKIHIARQLFDEIPQP), 104–138 (DTVSYNTLISGYADARETFAAMVLFKRMRKLGFEV), 139–169 (DGFTLSGLIAACCDRVDLIKQLHCFSVSGGF), 172–202 (YSSVNNAFVTYYSKGGLLREAVSVFYGMDEL), 204–238 (DEVSWNSMIVAYGQHKEGAKALALYKEMIFKGFKI), 239–273 (DMFTLASVLNALTSLDHLIGGRQFHGKLIKAGFHQ), 274–307 (NSHVGSGLIDFYSKCGGCDGMYDSEKVFQEILSP), 308–343 (DLVVWNTMISGYSMNEELSEEAVKSFRQMQRIGHRP), 344–378 (DDCSFVCVTSACSNLSSPSQCKQIHGLAIKSHIPS), 380–410 (RISVNNALISLYYKSGNLQDARWVFDRMPEL), 411–445 (NAVSFNCMIKGYAQHGHGTEALLLYQRMLDSGIAP), 446–476 (NKITFVAVLSACAHCGKVDEGQEYFNTMKET), and 482–512 (EAEHYSCMIDLLGRAGKLEEAERFIDAMPYK). Residues 517 to 592 (AWAALLGACR…KPGCSWIEVK (76 aa)) form a type E motif region. The interval 593-623 (KKKHVFVAEDWSHPMIREVNEYLEEMMKKMK) is type E(+) motif. The tract at residues 624-721 (KVGYVMDKKW…DGKCSCGDYW (98 aa)) is type DYW motif.

The protein belongs to the PPR family. PCMP-H subfamily.

The protein is Pentatricopeptide repeat-containing protein At3g49710 (PCMP-H79) of Arabidopsis thaliana (Mouse-ear cress).